The following is a 191-amino-acid chain: Phosphoheptose isomerase (191 aa).

Residues 34–191 (IATALKDGNK…LVEEMVCERS (158 aa)) form the SIS domain. 49 to 51 (NGG) lines the substrate pocket. The Zn(2+) site is built by H58 and E62. Substrate is bound by residues E62, 91–92 (ND), 117–119 (TTS), S122, and Q169. Q169 and H177 together coordinate Zn(2+).

This sequence belongs to the SIS family. GmhA subfamily. Zn(2+) is required as a cofactor.

It localises to the cytoplasm. The enzyme catalyses 2 D-sedoheptulose 7-phosphate = D-glycero-alpha-D-manno-heptose 7-phosphate + D-glycero-beta-D-manno-heptose 7-phosphate. It participates in carbohydrate biosynthesis; D-glycero-D-manno-heptose 7-phosphate biosynthesis; D-glycero-alpha-D-manno-heptose 7-phosphate and D-glycero-beta-D-manno-heptose 7-phosphate from sedoheptulose 7-phosphate: step 1/1. Catalyzes the isomerization of sedoheptulose 7-phosphate in D-glycero-D-manno-heptose 7-phosphate. The sequence is that of Phosphoheptose isomerase from Aquifex aeolicus (strain VF5).